Here is a 204-residue protein sequence, read N- to C-terminus: Protein phosphatase 1 regulatory subunit 1B (204 aa).

At Met-1 the chain carries N-acetylmethionine. Positions 1-204 (MDPKDRKKIQ…QRPSPSEPGT (204 aa)) are disordered. Phosphothreonine; by PKA is present on Thr-34. Basic and acidic residues predominate over residues 41 to 63 (LSEHSSPEEEASPHQRASGEGHH). 2 positions are modified to phosphoserine: Ser-45 and Ser-46. Thr-75 bears the Phosphothreonine; by CDK5 mark. The segment covering 89–100 (HLQSISNLNENQ) has biased composition (polar residues). Ser-102 is subject to Phosphoserine. Positions 109–118 (GELRELGYPR) are enriched in basic and acidic residues. 2 stretches are compositionally biased toward acidic residues: residues 119-138 (EEDE…EDSQ) and 170-183 (DESE…DQVE). A Phosphoserine modification is found at Ser-137. Ser-198 carries the phosphoserine modification.

This sequence belongs to the protein phosphatase inhibitor 1 family. Dopamine- and cyclic AMP-regulated neuronal phosphoprotein. Post-translationally, phosphorylation of Thr-34 is required for activity.

It localises to the cytoplasm. In terms of biological role, inhibitor of protein-phosphatase 1. This is Protein phosphatase 1 regulatory subunit 1B (PPP1R1B) from Homo sapiens (Human).